The following is a 474-amino-acid chain: Glutamate--tRNA ligase 2 (474 aa).

The 'HIGH' region signature appears at Pro16–Gly26. Positions Lys245–Arg249 match the 'KMSKS' region motif. Residue Lys248 participates in ATP binding.

It belongs to the class-I aminoacyl-tRNA synthetase family. Glutamate--tRNA ligase type 1 subfamily. As to quaternary structure, monomer.

The protein resides in the cytoplasm. The catalysed reaction is tRNA(Glu) + L-glutamate + ATP = L-glutamyl-tRNA(Glu) + AMP + diphosphate. Catalyzes the attachment of glutamate to tRNA(Glu) in a two-step reaction: glutamate is first activated by ATP to form Glu-AMP and then transferred to the acceptor end of tRNA(Glu). The sequence is that of Glutamate--tRNA ligase 2 from Rhizorhabdus wittichii (strain DSM 6014 / CCUG 31198 / JCM 15750 / NBRC 105917 / EY 4224 / RW1) (Sphingomonas wittichii).